The chain runs to 59 residues: UPF0434 protein VC_1876 (59 aa).

Belongs to the UPF0434 family.

In Vibrio cholerae serotype O1 (strain ATCC 39315 / El Tor Inaba N16961), this protein is UPF0434 protein VC_1876.